We begin with the raw amino-acid sequence, 564 residues long: R-linalool synthase (564 aa).

Mg(2+)-binding residues include aspartate 320, aspartate 324, aspartate 464, threonine 468, and glutamate 472. Positions 320–324 (DDVYD) match the DDXXD motif motif.

It belongs to the terpene synthase family. Requires Mg(2+) as cofactor. The cofactor is Mn(2+).

It carries out the reaction (2E)-geranyl diphosphate + H2O = (R)-linalool + diphosphate. Specifically catalyzes production of (R)-(-)-linalool, the main component of lavender essential oil. This chain is R-linalool synthase, found in Lavandula angustifolia (Lavender).